The following is a 425-amino-acid chain: Tyrosine--tRNA ligase (425 aa).

Tyr33 is a binding site for L-tyrosine. The short motif at 38 to 47 (PTADSLHLGN) is the 'HIGH' region element. Tyr170 and Gln174 together coordinate L-tyrosine. Residues 230–234 (KFGKS) carry the 'KMSKS' region motif. Lys233 is an ATP binding site. The S4 RNA-binding domain occupies 356–422 (KKLIDLLVET…GKKNKMIIRL (67 aa)).

Belongs to the class-I aminoacyl-tRNA synthetase family. TyrS type 1 subfamily. In terms of assembly, homodimer.

It is found in the cytoplasm. The enzyme catalyses tRNA(Tyr) + L-tyrosine + ATP = L-tyrosyl-tRNA(Tyr) + AMP + diphosphate + H(+). Functionally, catalyzes the attachment of tyrosine to tRNA(Tyr) in a two-step reaction: tyrosine is first activated by ATP to form Tyr-AMP and then transferred to the acceptor end of tRNA(Tyr). The sequence is that of Tyrosine--tRNA ligase from Protochlamydia amoebophila (strain UWE25).